The following is a 520-amino-acid chain: Laccase-1 (520 aa).

An N-terminal signal peptide occupies residues 1–19 (MRLSNALVLVAACISSVVA). Plastocyanin-like domains lie at 21–145 (TRTF…FIVY), 157–305 (VDDE…LTLA), and 375–488 (TVPV…FAEA). H82 and H84 together coordinate Cu cation. 2 disulfide bridges follow: C103-C509 and C135-C229. A glycan (N-linked (GlcNAc...) asparagine) is linked at N108. The Cu cation site is built by H127 and H129. Residues N239 and N299 are each glycosylated (N-linked (GlcNAc...) asparagine). 7 residues coordinate Cu cation: H417, H420, H422, H470, C471, H472, and H476. The N-linked (GlcNAc...) asparagine glycan is linked to N492.

The protein belongs to the multicopper oxidase family. Cu cation serves as cofactor.

The protein resides in the secreted. The enzyme catalyses 4 hydroquinone + O2 = 4 benzosemiquinone + 2 H2O. Its function is as follows. Lignin degradation and detoxification of lignin-derived products. The sequence is that of Laccase-1 (lcc1) from Agaricus bisporus (White button mushroom).